Reading from the N-terminus, the 591-residue chain is Serine/threonine-protein phosphatase PP2A 65 kDa regulatory subunit (591 aa).

Alanine 2 carries the post-translational modification N-acetylalanine. HEAT repeat units follow at residues 10–48, 49–86, 87–125, 126–163, 164–202, 203–241, 242–280, 281–323, 324–362, 363–401, 402–440, 441–479, 480–518, 519–557, and 558–591; these read DSLY…GEER, TRSE…GGPE, FAMY…SAQD, LEIH…VTQP, VKAE…ETEY, LKSD…PQDD, VEHL…GPEI, TRVD…QVQI, ILSS…GAYQ, TVEQ…GIQQ, LSQS…GQEF, FDQK…GAPW, AEQA…GTDI, TTKL…EASV, and IDAQ…IAAA.

This sequence belongs to the phosphatase 2A regulatory subunit A family. In terms of assembly, PP2A exists in several trimeric forms, all of which consist of a core composed of a catalytic subunit associated with a 65 kDa regulatory subunit (PR65) (subunit A). The core complex associates with a third, variable subunit (subunit B), which confers distinct properties to the holoenzyme. Interacts with the inorganic phosphate transporter PXo (CG10483). Component of the Integrator-PP2A (INTAC) complex, composed of the Integrator core complex and protein phosphatase 2A subunits mts/PP2A and Pp2A-29B. Expression varies in tissues throughout development. Highly distributed expression in early embryos. In late embryonal development, found at high levels in nervous system and gonads. In third instar larvae, found in brain, imaginal disks and salivary glands.

It localises to the nucleus. The PR65 subunit of protein phosphatase 2A serves as a scaffolding molecule to coordinate the assembly of the catalytic subunit and a variable regulatory B subunit. Key mediator of a quality checkpoint during transcription elongation as part of the Integrator-PP2A (INTAC) complex. The INTAC complex drives premature transcription termination of transcripts that are unfavorably configured for transcriptional elongation: within the INTAC complex, acts as a scaffolding subunit for mts/PP2A, which catalyzes dephosphorylation of the C-terminal domain (CTD) of Pol II subunit POLR2A/RPB1 and Spt5, thereby preventing transcriptional elongation. The chain is Serine/threonine-protein phosphatase PP2A 65 kDa regulatory subunit (Pp2A-29B) from Drosophila melanogaster (Fruit fly).